We begin with the raw amino-acid sequence, 286 residues long: Elongation factor Ts (286 aa).

The involved in Mg(2+) ion dislocation from EF-Tu stretch occupies residues 82–85; it reads TDFV.

The protein belongs to the EF-Ts family.

The protein localises to the cytoplasm. Its function is as follows. Associates with the EF-Tu.GDP complex and induces the exchange of GDP to GTP. It remains bound to the aminoacyl-tRNA.EF-Tu.GTP complex up to the GTP hydrolysis stage on the ribosome. The sequence is that of Elongation factor Ts from Hamiltonella defensa subsp. Acyrthosiphon pisum (strain 5AT).